Here is a 174-residue protein sequence, read N- to C-terminus: MNHDKSPIILIGFMGTGKSTIGKYVADEQNLSFIDIDSYIEEKYKLTIPEIFSKHGEQYFRNLEFTCLQECINTADIIATGGGIIESEEAFNFLKNQKNIIWLDCNIDIIYSRINDDPHRPNANNKTIKQLNDLYCSRILRYNEIAFKKFDSHLLSISEIYYELLNLIKASDQY.

Residue 15–20 (GTGKST) coordinates ATP. A Mg(2+)-binding site is contributed by Ser-19. Substrate is bound by residues Asp-37, Arg-61, and Gly-82. ATP is bound at residue Arg-120. Arg-138 contacts substrate.

It belongs to the shikimate kinase family. Monomer. It depends on Mg(2+) as a cofactor.

It localises to the cytoplasm. It carries out the reaction shikimate + ATP = 3-phosphoshikimate + ADP + H(+). It participates in metabolic intermediate biosynthesis; chorismate biosynthesis; chorismate from D-erythrose 4-phosphate and phosphoenolpyruvate: step 5/7. Catalyzes the specific phosphorylation of the 3-hydroxyl group of shikimic acid using ATP as a cosubstrate. This chain is Shikimate kinase, found in Staphylococcus aureus (strain Mu3 / ATCC 700698).